We begin with the raw amino-acid sequence, 264 residues long: Non-homologous end-joining factor xrc4 (264 aa).

Basic and acidic residues predominate over residues 173-186 (RNNEDNEDNHHINY). Residues 173–264 (RNNEDNEDNH…SHESSETVSE (92 aa)) are disordered. The segment covering 200–209 (QEGVNSSAVS) has biased composition (polar residues). Over residues 248–264 (DDSHRRSSHESSETVSE) the composition is skewed to basic and acidic residues.

It belongs to the XRCC4-XLF family. XRCC4 subfamily. In terms of assembly, interacts with lig4; the interaction is direct.

It is found in the nucleus. Involved in double-strand break repair via non-homologous end joining (NHEJ); the repair of a double-strand break in DNA in which the two broken ends are rejoined with little or no sequence complementarity. This Schizosaccharomyces pombe (strain 972 / ATCC 24843) (Fission yeast) protein is Non-homologous end-joining factor xrc4.